We begin with the raw amino-acid sequence, 150 residues long: UPF0208 membrane protein VV1_2222 (150 aa).

2 helical membrane passes run 42–62 and 70–90; these read FGIK…MAFN and AIVM…WLGH.

The protein belongs to the UPF0208 family.

Its subcellular location is the cell inner membrane. The protein is UPF0208 membrane protein VV1_2222 of Vibrio vulnificus (strain CMCP6).